Here is a 520-residue protein sequence, read N- to C-terminus: Cholesterol side-chain cleavage enzyme, mitochondrial (520 aa).

Residues 1-39 constitute a mitochondrion transit peptide; the sequence is MLARGLPFRSALVKACPPLLNTGREGWGHHRVGTGEGAG. The interval 27 to 47 is disordered; it reads WGHHRVGTGEGAGISTRTPRP. C461 contacts heme.

Belongs to the cytochrome P450 family. As to quaternary structure, interacts with FDX1/adrenodoxin. Requires heme as cofactor.

It localises to the mitochondrion inner membrane. The catalysed reaction is 6 reduced [adrenodoxin] + cholesterol + 3 O2 + 6 H(+) = 4-methylpentanal + pregnenolone + 6 oxidized [adrenodoxin] + 4 H2O. It catalyses the reaction 2 reduced [adrenodoxin] + cholesterol + O2 + 2 H(+) = (22R)-hydroxycholesterol + 2 oxidized [adrenodoxin] + H2O. It carries out the reaction (22R)-hydroxycholesterol + 2 reduced [adrenodoxin] + O2 + 2 H(+) = (20R,22R)-20,22-dihydroxycholesterol + 2 oxidized [adrenodoxin] + H2O. The enzyme catalyses (20R,22R)-20,22-dihydroxycholesterol + 2 reduced [adrenodoxin] + O2 + 2 H(+) = 4-methylpentanal + pregnenolone + 2 oxidized [adrenodoxin] + 2 H2O. It participates in lipid metabolism; C21-steroid hormone metabolism. Its pathway is steroid metabolism; cholesterol metabolism. Functionally, a cytochrome P450 monooxygenase that catalyzes the side-chain hydroxylation and cleavage of cholesterol to pregnenolone, the precursor of most steroid hormones. Catalyzes three sequential oxidation reactions of cholesterol, namely the hydroxylation at C22 followed with the hydroxylation at C20 to yield 20R,22R-hydroxycholesterol that is further cleaved between C20 and C22 to yield the C21-steroid pregnenolone and 4-methylpentanal. Mechanistically, uses molecular oxygen inserting one oxygen atom into a substrate and reducing the second into a water molecule. Two electrons are provided by NADPH via a two-protein mitochondrial transfer system comprising flavoprotein FDXR (adrenodoxin/ferredoxin reductase) and nonheme iron-sulfur protein FDX1 or FDX2 (adrenodoxin/ferredoxin). The polypeptide is Cholesterol side-chain cleavage enzyme, mitochondrial (Ovis aries (Sheep)).